Reading from the N-terminus, the 80-residue chain is Exodeoxyribonuclease 7 small subunit (80 aa).

The protein belongs to the XseB family. Heterooligomer composed of large and small subunits.

It is found in the cytoplasm. The enzyme catalyses Exonucleolytic cleavage in either 5'- to 3'- or 3'- to 5'-direction to yield nucleoside 5'-phosphates.. Functionally, bidirectionally degrades single-stranded DNA into large acid-insoluble oligonucleotides, which are then degraded further into small acid-soluble oligonucleotides. The sequence is that of Exodeoxyribonuclease 7 small subunit from Aliivibrio salmonicida (strain LFI1238) (Vibrio salmonicida (strain LFI1238)).